We begin with the raw amino-acid sequence, 186 residues long: Ribosome-recycling factor (186 aa).

Residues 135-156 (DANDEVKKLQKDKAVSEDEGKK) are disordered.

This sequence belongs to the RRF family.

Its subcellular location is the cytoplasm. Responsible for the release of ribosomes from messenger RNA at the termination of protein biosynthesis. May increase the efficiency of translation by recycling ribosomes from one round of translation to another. In Bdellovibrio bacteriovorus (strain ATCC 15356 / DSM 50701 / NCIMB 9529 / HD100), this protein is Ribosome-recycling factor.